The primary structure comprises 138 residues: Acidic phospholipase A2 VpaPLA2 (138 aa).

The N-terminal stretch at 1–16 (MRTLWIVAVCLMGVEG) is a signal peptide. 7 disulfides stabilise this stretch: Cys42–Cys131, Cys44–Cys60, Cys59–Cys111, Cys65–Cys138, Cys66–Cys104, Cys73–Cys97, and Cys91–Cys102. Residues Tyr43, Gly45, and Gly47 each coordinate Ca(2+). Residue His63 is part of the active site. A Ca(2+)-binding site is contributed by Asp64. Asp105 is a catalytic residue.

The protein belongs to the phospholipase A2 family. Group II subfamily. D49 sub-subfamily. The cofactor is Ca(2+). Expressed by the venom gland.

It localises to the secreted. The catalysed reaction is a 1,2-diacyl-sn-glycero-3-phosphocholine + H2O = a 1-acyl-sn-glycero-3-phosphocholine + a fatty acid + H(+). Its function is as follows. Snake venom phospholipase A2 (PLA2) that causes a sudden decrease of arterial blood pressure when injected into rat, but is not lethal. When co-injected with an uncharacterized basic protein (which did not show any enzymatic activity, but also causes a drop in blood pressure), this synergistical mixture is lethal. PLA2 catalyzes the calcium-dependent hydrolysis of the 2-acyl groups in 3-sn-phosphoglycerides. The protein is Acidic phospholipase A2 VpaPLA2 of Daboia palaestinae (Palestine viper).